The sequence spans 348 residues: NADH-quinone oxidoreductase subunit H (348 aa).

Transmembrane regions (helical) follow at residues 21 to 41 (IIGI…IIYA), 87 to 107 (GLFL…WAVI), 120 to 140 (IGLL…IIAG), 166 to 186 (IGFV…SAIV), 193 to 213 (IFGF…AVVF), 258 to 278 (NVIL…LPPV), 283 to 303 (LYMV…FFVF), and 323 to 343 (WKVF…WLML).

This sequence belongs to the complex I subunit 1 family. In terms of assembly, NDH-1 is composed of 14 different subunits. Subunits NuoA, H, J, K, L, M, N constitute the membrane sector of the complex.

The protein localises to the cell inner membrane. The enzyme catalyses a quinone + NADH + 5 H(+)(in) = a quinol + NAD(+) + 4 H(+)(out). In terms of biological role, NDH-1 shuttles electrons from NADH, via FMN and iron-sulfur (Fe-S) centers, to quinones in the respiratory chain. The immediate electron acceptor for the enzyme in this species is believed to be ubiquinone. Couples the redox reaction to proton translocation (for every two electrons transferred, four hydrogen ions are translocated across the cytoplasmic membrane), and thus conserves the redox energy in a proton gradient. This subunit may bind ubiquinone. The chain is NADH-quinone oxidoreductase subunit H from Rhizorhabdus wittichii (strain DSM 6014 / CCUG 31198 / JCM 15750 / NBRC 105917 / EY 4224 / RW1) (Sphingomonas wittichii).